Consider the following 200-residue polypeptide: Recombination protein RecR (200 aa).

A C4-type zinc finger spans residues 57 to 72; the sequence is CRQCRTLTEEELCPQC. One can recognise a Toprim domain in the interval 80-175; the sequence is TLLCVVEGPM…ITSRIAHGVP (96 aa).

The protein belongs to the RecR family.

May play a role in DNA repair. It seems to be involved in an RecBC-independent recombinational process of DNA repair. It may act with RecF and RecO. The protein is Recombination protein RecR of Pseudomonas fluorescens (strain SBW25).